The primary structure comprises 459 residues: Septin-4 (459 aa).

Phosphoserine occurs at positions 10, 49, 98, and 99. Disordered regions lie at residues phenylalanine 18–leucine 52 and serine 70–serine 98. The region spanning lysine 122–serine 395 is the Septin-type G domain. The G1 motif stretch occupies residues glycine 132–serine 139. Residues glycine 132–serine 139 and threonine 166 each bind GTP. A G3 motif region spans residues aspartate 189–glycine 192. Residues alanine 270 to aspartate 273 are G4 motif. Lysine 271–glutamate 279 lines the GTP pocket. At serine 306 the chain carries Phosphoserine. Positions 329 and 344 each coordinate GTP. The interval threonine 410–threonine 430 is disordered. Serine 413 carries the post-translational modification Phosphoserine. Position 415 is a phosphothreonine (threonine 415). Residues isoleucine 434–histidine 459 adopt a coiled-coil conformation.

The protein belongs to the TRAFAC class TrmE-Era-EngA-EngB-Septin-like GTPase superfamily. Septin GTPase family. Septins polymerize into heterooligomeric protein complexes that form filaments, and can associate with cellular membranes, actin filaments and microtubules. GTPase activity is required for filament formation. Interacts with SEPTIN8. Component of a septin core octameric complex consisting of SEPTIN12, SEPTIN7, SEPTIN6 and SEPTIN2 or SEPTIN4 in the order 12-7-6-2-2-6-7-12 or 12-7-6-4-4-6-7-12. Interacts with SEPTIN14 (via C-terminus). Interacts with DYRK1A. Interacts with SLC6A3/DAT and SNCA/alpha-synuclein. Interacts with STX1A; in the striatum. Interacts with XIAP (via BIR3 domain) following the induction of apoptosis. Interacts with AREL1 (via HECT domain); in the cytoplasm following induction of apoptosis. Post-translationally, phosphorylated by DYRK1A.

The protein localises to the cytoplasm. It localises to the cell projection. The protein resides in the cilium. Its subcellular location is the flagellum. It is found in the cytoplasmic vesicle. The protein localises to the secretory vesicle. It localises to the axon. The protein resides in the dendrite. Its subcellular location is the perikaryon. Its function is as follows. Filament-forming cytoskeletal GTPase. Pro-apoptotic protein involved in LGR5-positive intestinal stem cell and Paneth cell expansion in the intestines, via its interaction with XIAP. May also play a role in the regulation of cell fate in the intestine. Positive regulator of apoptosis involved in hematopoietic stem cell homeostasis; via its interaction with XIAP. Negative regulator of repair and hair follicle regeneration in response to injury, due to inhibition of hair follicle stem cell proliferation, potentially via its interaction with XIAP. Plays an important role in male fertility and sperm motility. During spermiogenesis, essential for the establishment of the annulus (a fibrous ring structure connecting the midpiece and the principal piece of the sperm flagellum) which is a requisite for the structural and mechanical integrity of the sperm. Involved in the migration of cortical neurons and the formation of neuron leading processes during embryonic development. Required for dopaminergic metabolism in presynaptic autoreceptors; potentially via activity as a presynaptic scaffold protein. This Rattus norvegicus (Rat) protein is Septin-4.